The chain runs to 436 residues: Prenyltransferase nscD (436 aa).

It belongs to the tryptophan dimethylallyltransferase family.

It participates in secondary metabolite biosynthesis. Its function is as follows. Prenyltransferase; part of the gene cluster that mediates the biosynthesis of neosartoricin B, a prenylated anthracenone that probably exhibits T-cell antiproliferative activity, suggestive of a physiological role as an immunosuppressive agent. The non-reducing polyketide synthase nscA probably synthesizes and cyclizes the decaketide backbone. The hydrolase nscB then mediates the product release through hydrolysis followed by spontaneous decarboxylation. The prenyltransferase nscD catalyzes the addition of the dimethylallyl group to the aromatic C5. The FAD-dependent monooxygenase nscC is then responsible for the stereospecific hydroxylation at C2. Neosartoricin B can be converted into two additional compounds neosartoricins C and D. Neosartoricin C is a spirocyclic compound that is cyclized through the attack of C3 hydroxyl on C14, followed by dehydration. On the other hand, neosartoricin D is a further cyclized compound in which attack of C2 on C14 in neosartoricin C results in the formation of the acetal-containing dioxabicyclo-octanone ring. Both of these compounds are novel and possibly represent related metabolites of the gene cluster. This Trichophyton tonsurans (strain CBS 112818) (Scalp ringworm fungus) protein is Prenyltransferase nscD.